The chain runs to 915 residues: Alanine--tRNA ligase (915 aa).

Residues histidine 605, histidine 609, cysteine 709, and histidine 713 each contribute to the Zn(2+) site. The segment at 882–901 (GGGGDERLAQGGGRNPDGLT) is disordered.

The protein belongs to the class-II aminoacyl-tRNA synthetase family. The cofactor is Zn(2+).

The protein resides in the cytoplasm. The enzyme catalyses tRNA(Ala) + L-alanine + ATP = L-alanyl-tRNA(Ala) + AMP + diphosphate. Catalyzes the attachment of alanine to tRNA(Ala) in a two-step reaction: alanine is first activated by ATP to form Ala-AMP and then transferred to the acceptor end of tRNA(Ala). Also edits incorrectly charged Ser-tRNA(Ala) and Gly-tRNA(Ala) via its editing domain. The polypeptide is Alanine--tRNA ligase (Methanopyrus kandleri (strain AV19 / DSM 6324 / JCM 9639 / NBRC 100938)).